Here is a 148-residue protein sequence, read N- to C-terminus: Large-conductance mechanosensitive channel (148 aa).

The next 2 membrane-spanning stretches (helical) occupy residues 9–29 (AFAV…GAAF) and 79–99 (IQTV…VKAI).

Belongs to the MscL family. As to quaternary structure, homopentamer.

It is found in the cell inner membrane. Functionally, channel that opens in response to stretch forces in the membrane lipid bilayer. May participate in the regulation of osmotic pressure changes within the cell. This is Large-conductance mechanosensitive channel from Pseudomonas savastanoi pv. phaseolicola (strain 1448A / Race 6) (Pseudomonas syringae pv. phaseolicola (strain 1448A / Race 6)).